Here is a 347-residue protein sequence, read N- to C-terminus: Very-long-chain 3-oxoacyl-CoA reductase (347 aa).

A helical membrane pass occupies residues 20–40 (LLWVVFGLGVLKCTTLSLRFL). NADP(+)-binding residues include valine 66, aspartate 120, asparagine 147, tyrosine 223, lysine 227, valine 256, and serine 258. Catalysis depends on tyrosine 223, which acts as the Proton donor. Lysine 227 (lowers pKa of active site Tyr) is an active-site residue.

The protein belongs to the short-chain dehydrogenases/reductases (SDR) family. Interacts with the fatty acid elongation system components ELO3 and TSC13.

It is found in the endoplasmic reticulum membrane. The catalysed reaction is a very-long-chain (3R)-3-hydroxyacyl-CoA + NADP(+) = a very-long-chain 3-oxoacyl-CoA + NADPH + H(+). It functions in the pathway lipid metabolism; fatty acid biosynthesis. Component of the microsomal membrane bound fatty acid elongation system, which produces the 26-carbon very long-chain fatty acids (VLCFA) from palmitate. Catalyzes the reduction of the 3-ketoacyl-CoA intermediate that is formed in each cycle of fatty acid elongation. VLCFAs serve as precursors for ceramide and sphingolipids. In Saccharomyces cerevisiae (strain RM11-1a) (Baker's yeast), this protein is Very-long-chain 3-oxoacyl-CoA reductase.